The primary structure comprises 20 residues: D-alpha-glycerophosphatase (20 aa).

Monomer. The cofactor is Mg(2+). Mn(2+) is required as a cofactor.

It localises to the cytoplasm. Its pathway is polyol metabolism; glycerol biosynthesis. The polypeptide is D-alpha-glycerophosphatase (Bacillus licheniformis).